We begin with the raw amino-acid sequence, 565 residues long: uncharacterized protein (565 aa).

An N-terminal signal peptide occupies residues 1–19 (MRWLATFVALLIAISSVSA). Polar residues predominate over residues 494–504 (TGAENVTNNSV). Positions 494-525 (TGAENVTNNSVTATTPPAKASQQTPAPATPPV) are disordered. The segment covering 505–519 (TATTPPAKASQQTPA) has biased composition (low complexity).

This is an uncharacterized protein from Archaeoglobus fulgidus (strain ATCC 49558 / DSM 4304 / JCM 9628 / NBRC 100126 / VC-16).